The following is a 1763-amino-acid chain: Non-reducing polyketide synthase PKS19 (1763 aa).

The tract at residues 20 to 261 (GDQRNLFRKL…PMKKVQGMWH (242 aa)) is N-terminal acylcarrier protein transacylase domain (SAT). Residues 390–822 (SSKIAVVGMA…GGNTSIIIEE (433 aa)) form the Ketosynthase family 3 (KS3) domain. Catalysis depends on for beta-ketoacyl synthase activity residues Cys561, His696, and His740. The interval 922-1227 (FAFTGQGTFY…QRDTDNWLTL (306 aa)) is malonyl-CoA:ACP transacylase (MAT) domain. The tract at residues 1307-1439 (HRLISEQYTD…VFYEDPSSWL (133 aa)) is N-terminal hotdog fold. Residues 1307-1609 (HRLISEQYTD…FLQWPRVMLN (303 aa)) form the PKS/mFAS DH domain. The segment at 1334–1588 (GVVDGHAMNG…FVGDVYVLQG (255 aa)) is product template (PT) domain. His1339 functions as the Proton acceptor; for dehydratase activity in the catalytic mechanism. The segment at 1461–1609 (VTGKASKLTT…FLQWPRVMLN (149 aa)) is C-terminal hotdog fold. The Proton donor; for dehydratase activity role is filled by Asp1522. The tract at residues 1619–1690 (AKPAAKVPGK…MEELPSPPAG (72 aa)) is disordered. The span at 1635–1647 (PHFKPHHVSRHKP) shows a compositional bias: basic residues. Residues 1689 to 1763 (AGMNDDMEKA…TIQDLKALLR (75 aa)) form the Carrier domain. Ser1726 is subject to O-(pantetheine 4'-phosphoryl)serine.

Its function is as follows. Non-reducing polyketide synthase that mediates the biosynthesis of alternariol (AOH), a micotoxin that seems not to be involved in virulence and oxidative stress tolerance. PKS19 alone is sufficient for AOH synthesis which is initiated by priming with acetyl-CoA, followed by sequential condensations of 6 malonyl-CoA units. In Phaeosphaeria nodorum (strain SN15 / ATCC MYA-4574 / FGSC 10173) (Glume blotch fungus), this protein is Non-reducing polyketide synthase PKS19.